The chain runs to 30 residues: GIPCGESCIFIPCITTVVGCSCSNKVCYDN.

A cross-link (cyclopeptide (Gly-Asn)) is located at residues 1 to 30; the sequence is GIPCGESCIFIPCITTVVGCSCSNKVCYDN. Intrachain disulfides connect C4-C20, C8-C22, and C13-C27.

Post-translationally, this is a cyclic peptide. In terms of tissue distribution, detected in seeds (at protein level).

In terms of biological role, probably participates in a plant defense mechanism. The protein is Cyclotide hyen-K of Pigea enneasperma (Spade flower).